The following is a 217-amino-acid chain: Ribosome maturation factor RimP (217 aa).

This sequence belongs to the RimP family.

It localises to the cytoplasm. Its function is as follows. Required for maturation of 30S ribosomal subunits. The chain is Ribosome maturation factor RimP from Nocardia farcinica (strain IFM 10152).